A 222-amino-acid chain; its full sequence is MLSRGVCGTSRQLAPALGYLGSRQKHSLPDLPYDYGALEPHINAQIMQLHHSKHHAAYVNNLNVTEEKYQEALAKGDVTAQIALQPALKFNGGGHINHSIFWTNLSPNGGGEPKGELLEAIKRDFGSFDKFKEKLTAASVGVQGSGWGWLGFNKERGHLQIAACPNQDPLQGTTGLIPLLGIDVWEHAYYLQYKNVRPDYLKAIWNVINWENVTERYMACKK.

The N-terminal 24 residues, 1–24, are a transit peptide targeting the mitochondrion; that stretch reads MLSRGVCGTSRQLAPALGYLGSRQ. H50 contributes to the Mn(2+) binding site. Y58 carries the post-translational modification 3'-nitrotyrosine. K68 and K75 each carry N6-acetyllysine; alternate. Residues K68 and K75 each carry the N6-succinyllysine; alternate modification. H98 is a binding site for Mn(2+). N6-acetyllysine is present on K114. 2 positions are modified to N6-acetyllysine; alternate: K122 and K130. N6-succinyllysine; alternate occurs at positions 122 and 130. Mn(2+) contacts are provided by D183 and H187. Position 202 is an N6-acetyllysine (K202).

The protein belongs to the iron/manganese superoxide dismutase family. In terms of assembly, homotetramer. Requires Mn(2+) as cofactor. Post-translationally, nitrated under oxidative stress. Nitration coupled with oxidation inhibits the catalytic activity. Acetylation at Lys-122 decreases enzymatic activity. Deacetylated by SIRT3 upon exposure to ionizing radiations or after long fasting. In terms of processing, polyubiquitinated; leading to proteasomal degradation. Deubiquitinated by USP36 which increases protein stability.

The protein localises to the mitochondrion matrix. It carries out the reaction 2 superoxide + 2 H(+) = H2O2 + O2. Destroys superoxide anion radicals which are normally produced within the cells and which are toxic to biological systems. This chain is Superoxide dismutase [Mn], mitochondrial (SOD2), found in Pongo pygmaeus (Bornean orangutan).